Here is a 401-residue protein sequence, read N- to C-terminus: Formate-dependent phosphoribosylglycinamide formyltransferase (401 aa).

Residues 22–23 (EL) and glutamate 82 each bind N(1)-(5-phospho-beta-D-ribosyl)glycinamide. Residues arginine 115, lysine 157, 162-167 (SSGKGQ), 197-200 (EGFI), and glutamate 205 each bind ATP. In terms of domain architecture, ATP-grasp spans 120-315 (RLAAESLGLP…EFELHARAIL (196 aa)). Glutamate 274 and glutamate 286 together coordinate Mg(2+). Residues aspartate 293, lysine 362, and 369–370 (RR) contribute to the N(1)-(5-phospho-beta-D-ribosyl)glycinamide site.

This sequence belongs to the PurK/PurT family. As to quaternary structure, homodimer.

The catalysed reaction is N(1)-(5-phospho-beta-D-ribosyl)glycinamide + formate + ATP = N(2)-formyl-N(1)-(5-phospho-beta-D-ribosyl)glycinamide + ADP + phosphate + H(+). It functions in the pathway purine metabolism; IMP biosynthesis via de novo pathway; N(2)-formyl-N(1)-(5-phospho-D-ribosyl)glycinamide from N(1)-(5-phospho-D-ribosyl)glycinamide (formate route): step 1/1. Its function is as follows. Involved in the de novo purine biosynthesis. Catalyzes the transfer of formate to 5-phospho-ribosyl-glycinamide (GAR), producing 5-phospho-ribosyl-N-formylglycinamide (FGAR). Formate is provided by PurU via hydrolysis of 10-formyl-tetrahydrofolate. The sequence is that of Formate-dependent phosphoribosylglycinamide formyltransferase from Cupriavidus taiwanensis (strain DSM 17343 / BCRC 17206 / CCUG 44338 / CIP 107171 / LMG 19424 / R1) (Ralstonia taiwanensis (strain LMG 19424)).